A 400-amino-acid polypeptide reads, in one-letter code: Na(+)/H(+) antiporter NhaA (400 aa).

12 helical membrane-spanning segments follow: residues 26 to 46 (AGGI…NSPL), 71 to 91 (LIHW…GMEV), 107 to 127 (IFPA…YWFI), 137 to 157 (GWAI…ALLS), 166 to 186 (IFLL…IALF), 189 to 209 (HGLS…LILL), 212 to 232 (FKVS…ASVL), 233 to 253 (KSGV…PLKG), 273 to 293 (FVIL…GIDV), 299 to 319 (PLLL…IFGF), 340 to 360 (IFAV…LASL), and 373 to 393 (LSRL…YLFL).

This sequence belongs to the NhaA Na(+)/H(+) (TC 2.A.33) antiporter family.

It localises to the cell inner membrane. It catalyses the reaction Na(+)(in) + 2 H(+)(out) = Na(+)(out) + 2 H(+)(in). Functionally, na(+)/H(+) antiporter that extrudes sodium in exchange for external protons. The protein is Na(+)/H(+) antiporter NhaA of Haemophilus influenzae (strain PittEE).